A 542-amino-acid chain; its full sequence is Peptide chain release factor 3 (542 aa).

A tr-type G domain is found at 11 to 279 (EKRRTFAIIS…AYVEYAPSPR (269 aa)). GTP contacts are provided by residues 20-27 (SHPDAGKT), 88-92 (DTPGH), and 142-145 (NKLD).

This sequence belongs to the TRAFAC class translation factor GTPase superfamily. Classic translation factor GTPase family. PrfC subfamily.

Its subcellular location is the cytoplasm. Functionally, increases the formation of ribosomal termination complexes and stimulates activities of RF-1 and RF-2. It binds guanine nucleotides and has strong preference for UGA stop codons. It may interact directly with the ribosome. The stimulation of RF-1 and RF-2 is significantly reduced by GTP and GDP, but not by GMP. The polypeptide is Peptide chain release factor 3 (Nitrosococcus oceani (strain ATCC 19707 / BCRC 17464 / JCM 30415 / NCIMB 11848 / C-107)).